The sequence spans 448 residues: Keratin, type I cytoskeletal 27 (448 aa).

The segment at 1 to 73 (MSVRFSSASR…ANEHGLLSGN (73 aa)) is head. The tract at residues 74–109 (EKVTMQNLNDRLASYLENVQALEEANADLEQKIKDW) is coil 1A. In terms of domain architecture, IF rod spans 74–389 (EKVTMQNLND…RLIDGDEGSC (316 aa)). The linker 1 stretch occupies residues 110-131 (YEKFGPGSCRGLDHDYSRYFPI). The coil 1B stretch occupies residues 132–223 (IDDLRTQIIS…KNHEEEMQAL (92 aa)). The segment at 224 to 246 (QCAAGGNVNVEMNAAPGVDLTVL) is linker 12. The tract at residues 247–385 (LNNMRAEYEA…ETYCRLIDGD (139 aa)) is coil 2. Residues 386 to 448 (EGSCVKAKGQ…VNKTEQRIPS (63 aa)) form a tail region. The segment at 427-448 (SRVHTLEEKSTKVNKTEQRIPS) is disordered. A compositionally biased stretch (basic and acidic residues) spans 430-448 (HTLEEKSTKVNKTEQRIPS).

It belongs to the intermediate filament family. As to quaternary structure, heterotetramer of two type I and two type II keratins. Interacts with KRT6A to form filaments. Expressed in skin. Expressed in the Henle layer and cuticle of the irs in hair follicle bulb. In the hair follicle, expression was observed in all layers of the irs but was stronger in the Henle layer and cuticle than the Huxley layer until the Henle layer differentiated (at protein level).

Its subcellular location is the cytoplasm. Functionally, essential for the proper assembly of type I and type II keratin protein complexes and formation of keratin intermediate filaments in the inner root sheath (irs). The protein is Keratin, type I cytoskeletal 27 of Mus musculus (Mouse).